A 174-amino-acid polypeptide reads, in one-letter code: Large ribosomal subunit protein uL10 (174 aa).

This sequence belongs to the universal ribosomal protein uL10 family. In terms of assembly, part of the ribosomal stalk of the 50S ribosomal subunit. The N-terminus interacts with L11 and the large rRNA to form the base of the stalk. The C-terminus forms an elongated spine to which L12 dimers bind in a sequential fashion forming a multimeric L10(L12)X complex.

Its function is as follows. Forms part of the ribosomal stalk, playing a central role in the interaction of the ribosome with GTP-bound translation factors. This Trichlorobacter lovleyi (strain ATCC BAA-1151 / DSM 17278 / SZ) (Geobacter lovleyi) protein is Large ribosomal subunit protein uL10.